A 403-amino-acid chain; its full sequence is Probable eukaryotic initiation factor 4A (403 aa).

Residues 1 to 29 (MSQQDRVAPQDQDSFLDDQPGVRPIPSFD) are disordered. The short motif at 26 to 54 (PSFDDMPLHQNLLRGIYSYGFEKPSSIQQ) is the Q motif element. A Helicase ATP-binding domain is found at 57-230 (IAPFTRGGDI…KKFMRDPVRI (174 aa)). ATP is bound at residue 70-77 (AQSGTGKT). A DEAD box motif is present at residues 178–181 (DEAD). Residues 241–401 (GIKQFFIAVE…ELPVDFAAYL (161 aa)) form the Helicase C-terminal domain.

Belongs to the DEAD box helicase family. eIF4A subfamily. In terms of assembly, eIF4F is a multi-subunit complex, the composition of which varies with external and internal environmental conditions. It is composed of at least EIF4A, EIF4E and EIF4G.

The catalysed reaction is ATP + H2O = ADP + phosphate + H(+). In terms of biological role, ATP-dependent RNA helicase which is a subunit of the eIF4F complex involved in cap recognition and is required for mRNA binding to ribosome. In the current model of translation initiation, eIF4A unwinds RNA secondary structures in the 5'-UTR of mRNAs which is necessary to allow efficient binding of the small ribosomal subunit, and subsequent scanning for the initiator codon. The polypeptide is Probable eukaryotic initiation factor 4A (Leishmania braziliensis).